The primary structure comprises 434 residues: Putative ankyrin repeat protein FPV219 (434 aa).

ANK repeat units follow at residues 33–62, 66–95, 101–131, 132–161, 165–195, 196–225, and 229–258; these read DDLSPLHHAVSRGYKEIVISMLEHGADVNL, EVCSPLHIAIKNDNVEMVQLLIDNGADTDC, HGTPLQCAILNENYRITDALLESGADTHEIY, TKNHPIIEAIKLDNLPLVRLLLRHGADVNT, LYGYPIHLAIRYGNIDIIKELLYHGVIESYS, LYPSLLHQSIMCNNKEVVLLLISMGFDVNA, and EGNTPMHLAVQKNLVGIVKILLDKGADTSI.

This is Putative ankyrin repeat protein FPV219 from Fowlpox virus (strain NVSL) (FPV).